The primary structure comprises 808 residues: Genome polyprotein (808 aa).

Residues 34 to 55 (TAEVGSHQPEPLKTSVDKPGSK) form a disordered region. 2 consecutive short sequence motifs ((L)YPX(n)L motif) follow at residues 146–150 (YPHGL) and 179–184 (YPVWEL).

It belongs to the picornaviridae polyprotein family. Homopentamer. Homooligomer. As to quaternary structure, interacts with capsid protein VP2. Interacts with capsid protein VP3. In terms of assembly, interacts with capsid protein VP1. Interacts with capsid protein VP3. Interacts with capsid protein VP1. Interacts with capsid protein VP2. In terms of processing, specific enzymatic cleavages by viral protease in vivo yield a variety of precursors and mature proteins. Polyprotein processing intermediates are produced, such as P1-2A which is a functional precursor of the structural proteins, VP0 which is a VP4-VP2 precursor, VP1-2A precursor, 3ABC precursor which is a stable and catalytically active precursor of 3A, 3B and 3C proteins, 3AB and 3CD precursors. The assembly signal 2A is removed from VP1-2A by a host protease, possibly host Cathepsin L. This cleavage occurs over a region of 3 amino-acids probably generating VP1 proteins with heterogeneous C-termini. Post-translationally, during virion maturation, immature virions are rendered infectious following cleavage of VP0 into VP4 and VP2. This maturation seems to be an autocatalytic event triggered by the presence of RNA in the capsid and is followed by a conformational change of the particle. The assembly signal 2A is removed from VP1-2A by a host protease, possibly host Cathepsin L in naked virions. This cleavage does not occur in enveloped virions. This cleavage occurs over a region of 3 amino-acids probably generating VP1 proteins with heterogeneous C-termini. In terms of processing, unlike other picornaviruses, does not seem to be myristoylated.

Its subcellular location is the virion. It is found in the host endosome. It localises to the host multivesicular body. Its function is as follows. Capsid proteins VP1, VP2, and VP3 form a closed capsid enclosing the viral positive strand RNA genome. All these proteins contain a beta-sheet structure called beta-barrel jelly roll. Together they form an icosahedral capsid (T=3) composed of 60 copies of each VP1, VP2, and VP3, with a diameter of approximately 300 Angstroms. VP1 is situated at the 12 fivefold axes, whereas VP2 and VP3 are located at the quasi-sixfold axes. The naked capsid interacts with the host receptor HAVCR1 to provide virion attachment to and probably entry into the target cell. In terms of biological role, VP0 precursor is a component of the immature procapsids. Plays a role in the assembly of the 12 pentamers into an icosahedral structure. Has not been detected in mature virions, supposedly owing to its small size. Functionally, precursor component of immature procapsids that corresponds to an extended form of the structural protein VP1. After maturation, possibly by the host Cathepsin L, the assembly signal 2A is cleaved to give rise to the mature VP1 protein. This is Genome polyprotein from Human hepatitis A virus genotype IIIA (isolate GA76) (HHAV).